The following is a 614-amino-acid chain: ATP-dependent rRNA helicase SPB4 (614 aa).

Positions 10–38 match the Q motif motif; that stretch reads WSVLKCDLHPWIKEAIKSLGYPTMTPVQA. Residues 41–233 form the Helicase ATP-binding domain; sequence IPLFSGNKDV…RTGMANPVKI (193 aa). 54–61 is an ATP binding site; the sequence is AVTGSGKT. A DEAD box motif is present at residues 181–184; sequence DEAD. A Helicase C-terminal domain is found at 260–431; it reads KISALIALIK…KFQKKFRKYM (172 aa). Positions 510–581 form a coiled coil; sequence EYADKQKEES…IEKQLMDDSS (72 aa). The span at 514 to 529 shows a compositional bias: basic and acidic residues; the sequence is KQKEESRKKNLEEDKA. The segment at 514–614 is disordered; that stretch reads KQKEESRKKN…DSMQGSFDDL (101 aa). Residues 530–541 are compositionally biased toward basic residues; sequence RKVHDAKKRKEL. 2 stretches are compositionally biased toward basic and acidic residues: residues 551-563 and 584-595; these read KTDK…ERRE and EETKVDWKEMVK. Positions 604–614 are enriched in polar residues; that stretch reads SDSMQGSFDDL.

This sequence belongs to the DEAD box helicase family. DDX55/SPB4 subfamily. As to quaternary structure, component of pre-60S ribosomal complexes.

It localises to the nucleus. The protein localises to the nucleolus. The enzyme catalyses ATP + H2O = ADP + phosphate + H(+). ATP-binding RNA helicase involved in the biogenesis of 60S ribosomal subunits. Binds 90S pre-ribosomal particles and dissociates from pre-60S ribosomal particles after processing of 27SB pre-rRNA. Required for the normal formation of 18S rRNA through the processing of pre-rRNAs at sites A0, A1 and A2, and the normal formation of 25S and 5.8S rRNAs through the processing of pre-rRNAs at sites C1 and C2. The protein is ATP-dependent rRNA helicase SPB4 of Debaryomyces hansenii (strain ATCC 36239 / CBS 767 / BCRC 21394 / JCM 1990 / NBRC 0083 / IGC 2968) (Yeast).